Consider the following 487-residue polypeptide: Cytochrome P450 716A75 (487 aa).

The helical transmembrane segment at 5–25 (FVSLLSLFLLILLPLSLLFLF) threads the bilayer. A heme-binding site is contributed by Cys-434.

The protein belongs to the cytochrome P450 family. Requires heme as cofactor.

It localises to the membrane. It catalyses the reaction beta-amyrin + reduced [NADPH--hemoprotein reductase] + O2 = erythrodiol + oxidized [NADPH--hemoprotein reductase] + H2O + H(+). The catalysed reaction is erythrodiol + reduced [NADPH--hemoprotein reductase] + O2 = oleanolic aldehyde + oxidized [NADPH--hemoprotein reductase] + 2 H2O + H(+). It carries out the reaction oleanolic aldehyde + reduced [NADPH--hemoprotein reductase] + O2 = oleanolate + oxidized [NADPH--hemoprotein reductase] + H2O + 2 H(+). Its function is as follows. Catalyzes the C-28 oxidation of beta-amyrin to form erythrodiol. Catalyzes the C-28 oxidation of erythrodiol to form oleanolic aldehyde. Catalyzes the C-28 oxidation of oleanolic aldehyde to form oleanolate. The protein is Cytochrome P450 716A75 of Maesa lanceolata (False assegai).